A 114-amino-acid chain; its full sequence is Kita-kyushu lung cancer antigen 1 homolog (114 aa).

Topologically, residues 1-4 (MNVY) are cytoplasmic. The chain crosses the membrane as a helical; Signal-anchor for type II membrane protein span at residues 5 to 22 (LLLASGILCALMTVFWKY). The Extracellular segment spans residues 23 to 114 (RRFQRNTGEM…RSASAHRKST (92 aa)). Residue Asn-84 is glycosylated (N-linked (GlcNAc...) asparagine).

The protein localises to the cell membrane. The chain is Kita-kyushu lung cancer antigen 1 homolog (CT83) from Macaca fascicularis (Crab-eating macaque).